Consider the following 362-residue polypeptide: MGAQKSIHAGRAKIDVNVDFTHKLCTSLMFPAFRDTSSPLSLVIGSLCIKHPNLFGGSEKLDVSWDKGLYDSNVLVAFRRPRPEWRPQQCFFIQHSLSPEIGVHGTPVDNFSRSGSGGVNLSKLALGLDLSEPASSKWSSTTSIKFEHVRPINDDGRAITRDLDGFPITCSGNTHDSMVVLKQESRFAKATDQGLSHFSMQIEQGIPVVSKWLIFNRFKFVASKGVRFGPAFLLASLTGGSIVGDMAPYQAFAIGGLGSVRGYGEGAVGSGRSCLVANTELALPLNKMTEGTIFLDCGTDLGSSRLVPGNPSMRQGKPGFGYGFGYGLRFKSPLGHLQVDYAINAFNQKTLYFGVTNLASST.

It belongs to the OEP80 (TC 1.B.33.2) family. Expressed in germinating seeds. Expressed in the vasculature of roots, cotyledons and leaves.

The protein resides in the plastid. The protein localises to the chloroplast outer membrane. In terms of biological role, beta-barrel pore-forming protein which possesses voltage-dependent channel activity. Required for proper plastid development. Involved in the maintenance of metabolic homeostasis of full-grown plants. The polypeptide is Outer envelope protein 39, chloroplastic (Arabidopsis thaliana (Mouse-ear cress)).